Reading from the N-terminus, the 673-residue chain is Methionine--tRNA ligase (673 aa).

The 'HIGH' region motif lies at 13–23 (PYANGSIHLGH). Zn(2+) is bound by residues cysteine 144, cysteine 147, cysteine 157, and cysteine 160. The 'KMSKS' region signature appears at 330–334 (KMSKS). Lysine 333 lines the ATP pocket. One can recognise a tRNA-binding domain in the interval 572–673 (DFAQLDLRIA…GRARAGMTIS (102 aa)).

It belongs to the class-I aminoacyl-tRNA synthetase family. MetG type 1 subfamily. As to quaternary structure, homodimer. It depends on Zn(2+) as a cofactor.

The protein localises to the cytoplasm. The enzyme catalyses tRNA(Met) + L-methionine + ATP = L-methionyl-tRNA(Met) + AMP + diphosphate. In terms of biological role, is required not only for elongation of protein synthesis but also for the initiation of all mRNA translation through initiator tRNA(fMet) aminoacylation. This chain is Methionine--tRNA ligase, found in Dichelobacter nodosus (strain VCS1703A).